A 1080-amino-acid chain; its full sequence is Carbamoyl phosphate synthase large chain (1080 aa).

Residues 1–403 (MPKRTDLKTI…SLQKALRGLE (403 aa)) are carboxyphosphate synthetic domain. 12 residues coordinate ATP: R129, R169, G175, G176, E208, V210, E215, G241, V242, H243, Q285, and E299. The ATP-grasp 1 domain maps to 133 to 328 (RVAMGEIGLD…IAKVAAKLAV (196 aa)). The Mg(2+) site is built by Q285, E299, and N301. Q285, E299, and N301 together coordinate Mn(2+). An oligomerization domain region spans residues 404-554 (TGKIGLDPTG…YSTYEDECEA (151 aa)). Positions 555–942 (LPSNRDKIMI…AFARAQEAGG (388 aa)) are carbamoyl phosphate synthetic domain. Residues 679–876 (QQLVDKLGLK…LAKIAARCMA (198 aa)) enclose the ATP-grasp 2 domain. The ATP site is built by R715, R754, L756, E761, G787, V788, H789, S790, Q830, and E847. Residues Q830, E847, and N849 each contribute to the Mg(2+) site. 3 residues coordinate Mn(2+): Q830, E847, and N849. Residues 943–1080 (IKAPPLGKAF…LQELHKELEA (138 aa)) form the MGS-like domain. An allosteric domain region spans residues 943–1080 (IKAPPLGKAF…LQELHKELEA (138 aa)).

The protein belongs to the CarB family. In terms of assembly, composed of two chains; the small (or glutamine) chain promotes the hydrolysis of glutamine to ammonia, which is used by the large (or ammonia) chain to synthesize carbamoyl phosphate. Tetramer of heterodimers (alpha,beta)4. The cofactor is Mg(2+). Requires Mn(2+) as cofactor.

It carries out the reaction hydrogencarbonate + L-glutamine + 2 ATP + H2O = carbamoyl phosphate + L-glutamate + 2 ADP + phosphate + 2 H(+). It catalyses the reaction hydrogencarbonate + NH4(+) + 2 ATP = carbamoyl phosphate + 2 ADP + phosphate + 2 H(+). It participates in amino-acid biosynthesis; L-arginine biosynthesis; carbamoyl phosphate from bicarbonate: step 1/1. Its pathway is pyrimidine metabolism; UMP biosynthesis via de novo pathway; (S)-dihydroorotate from bicarbonate: step 1/3. Large subunit of the glutamine-dependent carbamoyl phosphate synthetase (CPSase). CPSase catalyzes the formation of carbamoyl phosphate from the ammonia moiety of glutamine, carbonate, and phosphate donated by ATP, constituting the first step of 2 biosynthetic pathways, one leading to arginine and/or urea and the other to pyrimidine nucleotides. The large subunit (synthetase) binds the substrates ammonia (free or transferred from glutamine from the small subunit), hydrogencarbonate and ATP and carries out an ATP-coupled ligase reaction, activating hydrogencarbonate by forming carboxy phosphate which reacts with ammonia to form carbamoyl phosphate. The polypeptide is Carbamoyl phosphate synthase large chain (Xanthomonas campestris pv. campestris (strain ATCC 33913 / DSM 3586 / NCPPB 528 / LMG 568 / P 25)).